The following is a 796-amino-acid chain: YY1-associated protein 1 (796 aa).

Disordered stretches follow at residues 1–45 (MEEE…ATPS) and 463–488 (IQPS…SEAP). The span at 23-36 (PPDKREGSAVDPGK) shows a compositional bias: basic and acidic residues. Over residues 463–472 (IQPSPSLQPS) the composition is skewed to low complexity. Positions 473-485 (FNPGKTPAQSTHS) are enriched in polar residues. Serine 724 is modified (phosphoserine). A disordered region spans residues 755–776 (RQALEPLPQGIQESLNNSSPGD). Positions 765 to 774 (IQESLNNSSP) are enriched in polar residues.

As to quaternary structure, interacts with YY1. Interacts with MAD2L2. Interacts with INO80. As to expression, ubiquitous. Detected in small intestine, skeletal muscle, lung, pancreas, brain, stomach, spleen, colon and heart. Detected at very low levels in healthy liver. Highly expressed in most liver carcinomas.

It is found in the cytoplasm. The protein resides in the nucleus. The protein localises to the nucleoplasm. It localises to the nucleolus. Associates with the INO80 chromatin remodeling complex, which is responsible for transcriptional regulation, DNA repair, and replication. Enhances transcription activation by YY1. Plays a role in cell cycle regulation. This chain is YY1-associated protein 1, found in Homo sapiens (Human).